The primary structure comprises 468 residues: 6-phospho-beta-galactosidase (468 aa).

D-galactose 6-phosphate is bound by residues Gln19, His116, Asn159, Glu160, and Asn297. Glu160 serves as the catalytic Proton donor. The active-site Nucleophile is Glu375. Ser428, Trp429, Lys435, and Tyr437 together coordinate D-galactose 6-phosphate.

Belongs to the glycosyl hydrolase 1 family.

It catalyses the reaction a 6-phospho-beta-D-galactoside + H2O = D-galactose 6-phosphate + an alcohol. It participates in carbohydrate metabolism; lactose degradation; D-galactose 6-phosphate and beta-D-glucose from lactose 6-phosphate: step 1/1. The protein is 6-phospho-beta-galactosidase of Streptococcus pyogenes serotype M12 (strain MGAS2096).